The primary structure comprises 132 residues: Small ribosomal subunit protein uS8 (132 aa).

It belongs to the universal ribosomal protein uS8 family. Part of the 30S ribosomal subunit. Contacts proteins S5 and S12.

In terms of biological role, one of the primary rRNA binding proteins, it binds directly to 16S rRNA central domain where it helps coordinate assembly of the platform of the 30S subunit. This is Small ribosomal subunit protein uS8 from Limosilactobacillus fermentum (strain NBRC 3956 / LMG 18251) (Lactobacillus fermentum).